The sequence spans 519 residues: uncharacterized protein (519 aa).

13 helical membrane passes run 19–39 (FSSSVWSIVPALLAIILAIAT), 42–62 (VLVSLSAGIIIGSLMLSDWQI), 87–107 (MNIVLFLLLLGVLTALLTVSG), 128–148 (LLAASLVFVTFIDDYFHSLAV), 179–199 (VMMPVSSWGAYIITLIGGLLA), 220–240 (FYAIFSIIMVFFVAYFSFDIA), 270–290 (LILPILVLIIATVSMMIYTGA), 311–331 (VGTSLVVGGFCSIIISTLLII), 345–365 (WIVGIKSMSGAIAILFFAWTI), 386–406 (IPMQFLPVILFVLGAAMAFST), 413–433 (FGIMLPIAAAMAANAAPELLL), 475–495 (LPYAATVATATSIGYIVVGFT), and 496–516 (YSGLAGFAATAVSLIVIIFAV).

It localises to the cell membrane. This is an uncharacterized protein from Haemophilus influenzae (strain ATCC 51907 / DSM 11121 / KW20 / Rd).